The primary structure comprises 217 residues: Ras-related protein RABA2a (217 aa).

19–26 (GDSGVGKS) contacts GTP. Residues 41-49 (SKSTIGVEF) carry the Effector region motif. GTP contacts are provided by residues 67–71 (DTAGQ), 125–128 (NKTD), and 155–156 (SA). Residue cysteine 213 is the site of S-palmitoyl cysteine attachment. Cysteine methyl ester is present on cysteine 214. Residue cysteine 214 is the site of S-geranylgeranyl cysteine attachment. Positions 215 to 217 (SSS) are cleaved as a propeptide — removed in mature form.

The protein belongs to the small GTPase superfamily. Rab family. Expressed in root tips.

Its subcellular location is the endosome membrane. It localises to the golgi apparatus. The protein localises to the trans-Golgi network membrane. Its function is as follows. Intracellular vesicle trafficking and protein transport. The protein is Ras-related protein RABA2a (RABA2A) of Arabidopsis thaliana (Mouse-ear cress).